A 309-amino-acid polypeptide reads, in one-letter code: Olfactory receptor 7A17 (309 aa).

At 1-25 (MEPENDTGISEFVLLGLSEEPELQP) the chain is on the extracellular side. Asn5 carries N-linked (GlcNAc...) asparagine glycosylation. Residues 26–46 (FLFGLFLSMYLVTVLGNLLII) traverse the membrane as a helical segment. Over 47-54 (LATISDSH) the chain is Cytoplasmic. Residues 55-75 (LHTPMYFFLSNLSFADICFIS) traverse the membrane as a helical segment. Residues 76–99 (TTIPKMLINIQTQSRVITYAGCIT) lie on the Extracellular side of the membrane. A disulfide bridge links Cys97 with Cys189. Residues 100 to 120 (QMCFFVLFGGLDSLLLAVMAY) form a helical membrane-spanning segment. The Cytoplasmic segment spans residues 121–139 (DRFVAICHPLHYTVIMNPR). Residues 140 to 160 (LCGLLVLASWMIAALNSLSQS) form a helical membrane-spanning segment. Over 161-197 (LMVLWLSFCTDLEIPHFFCELNQVIHLACSDTFLNDM) the chain is Extracellular. The helical transmembrane segment at 198-217 (GMYFAAGLLAGGPLVGILCS) threads the bilayer. At 218–237 (YSKIVSSIRAISSAQGKYKA) the chain is on the cytoplasmic side. The helical transmembrane segment at 238–258 (FSTCASHLSVVSLFCCTGLGV) threads the bilayer. The Extracellular portion of the chain corresponds to 259-271 (YLTSAATHNSHTS). A helical transmembrane segment spans residues 272–292 (ATASVMYTVATPMLNPFIYSL). Topologically, residues 293–309 (RNKDIKRALKMSFRGKQ) are cytoplasmic.

Belongs to the G-protein coupled receptor 1 family.

It localises to the cell membrane. Functionally, odorant receptor. The protein is Olfactory receptor 7A17 (OR7A17) of Homo sapiens (Human).